A 183-amino-acid chain; its full sequence is MNSFTTKQIVATGIGAAVFIILSRFAAIPTGVPNTSIETAYAFLAFMAVLFGPITAGLIGLIGHALKDAILYGSPWWSWVIVSGFVGLGIGLIANRIRLEEGGLTTKKIILFNATQAVVQAIGWIVIAPVLDILIYAEPANKVFVQGAVAATSNILTVGVIGTLLLVTYAKTRSQAGSLKREA.

The next 5 helical transmembrane spans lie at 9–29 (IVATGIGAAVFIILSRFAAIP), 42–62 (AFLAFMAVLFGPITAGLIGLI), 74–94 (SPWWSWVIVSGFVGLGIGLIA), 117–137 (AVVQAIGWIVIAPVLDILIYA), and 147–167 (GAVAATSNILTVGVIGTLLLV).

It belongs to the UPF0397 family.

Its subcellular location is the cell membrane. This Exiguobacterium sp. (strain ATCC BAA-1283 / AT1b) protein is UPF0397 protein EAT1b_2102.